Reading from the N-terminus, the 178-residue chain is Protein GrpE (178 aa).

Basic and acidic residues-rich tracts occupy residues methionine 1–alanine 19 and serine 30–arginine 42. Residues methionine 1–arginine 42 are disordered.

The protein belongs to the GrpE family. As to quaternary structure, homodimer.

The protein localises to the cytoplasm. Participates actively in the response to hyperosmotic and heat shock by preventing the aggregation of stress-denatured proteins, in association with DnaK and GrpE. It is the nucleotide exchange factor for DnaK and may function as a thermosensor. Unfolded proteins bind initially to DnaJ; upon interaction with the DnaJ-bound protein, DnaK hydrolyzes its bound ATP, resulting in the formation of a stable complex. GrpE releases ADP from DnaK; ATP binding to DnaK triggers the release of the substrate protein, thus completing the reaction cycle. Several rounds of ATP-dependent interactions between DnaJ, DnaK and GrpE are required for fully efficient folding. In Streptococcus sanguinis (strain SK36), this protein is Protein GrpE.